Here is a 393-residue protein sequence, read N- to C-terminus: MSVMNGREVARESRDAQVFEFGTAPGSAVVKIPVQGGPIGGIAISRDGSLLVVTNNGTDTVSVVGTDTCRVTQTVTSVNEPFAIAMGNAEANRAYVSTVSSAYDAIAVIDVATNTVLGTHPLALSVSDLTLSPDDKYLYVSRNGTRGADVAVLDTTTGALIDVVDVSQAPGTTTQCVRMSPDGSVLYVGANGPSGGLLVVITTRAQSDGGRIGSRSRSRQKSSKPRGNQAAAGLRVVATIDIGSSVRDVALSPDGAIAYVASCGSDFGAVVDVIDTRTHQITSSRAISEIGGLVTRVSVSGDADRAYLVSEDRVTVLCTRTHDVIGTIRTGQPSCVVESPDGKYLYIADYSGTITRTAVASTIVSGTEQLALQRRGSMQWFSPELQQYAPALA.

Residues 208 to 230 (DGGRIGSRSRSRQKSSKPRGNQA) are disordered. A compositionally biased stretch (basic residues) spans 214-224 (SRSRSRQKSSK).

Functionally, may play an important role in host-pathogen interactions and in ESAT-6 secretion. The sequence is that of Seven-bladed beta-propeller protein Rv1057 from Mycobacterium tuberculosis (strain ATCC 25618 / H37Rv).